Reading from the N-terminus, the 139-residue chain is uncharacterized protein (139 aa).

Positions 1–133 (MLSEETIRVI…LAKTLITLEK (133 aa)) constitute a Globin domain.

Belongs to the globin family.

This is an uncharacterized protein from Aquifex aeolicus (strain VF5).